Reading from the N-terminus, the 394-residue chain is 1-deoxy-D-xylulose 5-phosphate reductoisomerase (394 aa).

7 residues coordinate NADPH: Thr12, Gly13, Ser14, Ile15, Gly38, Asn41, and Asn132. Lys133 contributes to the 1-deoxy-D-xylulose 5-phosphate binding site. Glu134 contributes to the NADPH binding site. Asp156 is a Mn(2+) binding site. Residues Ser157, Glu158, Ser182, and His205 each contribute to the 1-deoxy-D-xylulose 5-phosphate site. Glu158 contributes to the Mn(2+) binding site. Gly211 contacts NADPH. 1-deoxy-D-xylulose 5-phosphate contacts are provided by Ser218, Asn223, Lys224, and Glu227. Position 227 (Glu227) interacts with Mn(2+).

Belongs to the DXR family. Requires Mg(2+) as cofactor. Mn(2+) is required as a cofactor.

The enzyme catalyses 2-C-methyl-D-erythritol 4-phosphate + NADP(+) = 1-deoxy-D-xylulose 5-phosphate + NADPH + H(+). The protein operates within isoprenoid biosynthesis; isopentenyl diphosphate biosynthesis via DXP pathway; isopentenyl diphosphate from 1-deoxy-D-xylulose 5-phosphate: step 1/6. Functionally, catalyzes the NADPH-dependent rearrangement and reduction of 1-deoxy-D-xylulose-5-phosphate (DXP) to 2-C-methyl-D-erythritol 4-phosphate (MEP). The sequence is that of 1-deoxy-D-xylulose 5-phosphate reductoisomerase from Paenarthrobacter aurescens (strain TC1).